The chain runs to 566 residues: MFSSGVALLTSYMLVLLLLAWPLGIALTRLVDDRLPLWLIRVESHIKFLENSQMKWQTYAAAILVFNLLGAALLFLLMLFQGSLPLNPLHLPDVSPLLAMNTAISFITNTNWQAYAGETTLSPLSQMLGLTVHNFLSAANGIAVAFVLMRALTRTGSQQLGNAWVDIWRITVYLLLPLSVIYALFLAQQGVVQSLMAQISVPGLSGVEQHIPLGPVASQEAIKMLGTNGGGYFNANSAHPFENPTALTNFVQMVSILLIPAALCICFGRVAGDNRVGSALLWTMGIMLSVAALLIMWAESQGHPVLANLAVDQQMSAIQSGGNMEGKETRFGLWASSLFATITTAASCGAVNAMHDSLTPLGGLIPMVLMQLGEVVFGGVGSGWYGMMLFVFLTVFLAGLMIGRTPEYLGKKIEIYEMKMVTIGLLIPPALVLLGTALAVILPQGLVSLQESGAHGFSEMLYAFSSAANNNGSAFAGLNSNTPFMNITLAVLMFVGRFGVMLPVLAIAGALIEKRHQPASAGSLACHGPLFVGMLIGVVLLIGALTFIPALALGPIVEHLTLWQTH.

12 consecutive transmembrane segments (helical) span residues 6–26, 60–80, 128–148, 167–187, 247–267, 276–296, 331–351, 361–381, 383–403, 423–443, 492–512, and 530–550; these read VALL…LGIA, AAAI…LMLF, LGLT…AFVL, IWRI…LFLA, LTNF…CICF, VGSA…LLIM, FGLW…CGAV, LGGL…GGVG, GWYG…LMIG, IGLL…VILP, LMFV…GALI, and LFVG…FIPA.

The protein belongs to the KdpA family. In terms of assembly, the system is composed of three essential subunits: KdpA, KdpB and KdpC.

The protein resides in the cell inner membrane. In terms of biological role, part of the high-affinity ATP-driven potassium transport (or Kdp) system, which catalyzes the hydrolysis of ATP coupled with the electrogenic transport of potassium into the cytoplasm. This subunit binds the periplasmic potassium ions and delivers the ions to the membrane domain of KdpB through an intramembrane tunnel. This chain is Potassium-transporting ATPase potassium-binding subunit, found in Tolumonas auensis (strain DSM 9187 / NBRC 110442 / TA 4).